Consider the following 432-residue polypeptide: 5-methylthioadenosine/S-adenosylhomocysteine deaminase (432 aa).

The Zn(2+) site is built by H62 and H64. Substrate-binding residues include E91 and H184. H211 provides a ligand contact to Zn(2+). The substrate site is built by E214 and D299. D299 provides a ligand contact to Zn(2+).

Belongs to the metallo-dependent hydrolases superfamily. MTA/SAH deaminase family. Zn(2+) is required as a cofactor.

The enzyme catalyses S-adenosyl-L-homocysteine + H2O + H(+) = S-inosyl-L-homocysteine + NH4(+). It carries out the reaction S-methyl-5'-thioadenosine + H2O + H(+) = S-methyl-5'-thioinosine + NH4(+). In terms of biological role, catalyzes the deamination of 5-methylthioadenosine and S-adenosyl-L-homocysteine into 5-methylthioinosine and S-inosyl-L-homocysteine, respectively. Is also able to deaminate adenosine. In Haloarcula marismortui (strain ATCC 43049 / DSM 3752 / JCM 8966 / VKM B-1809) (Halobacterium marismortui), this protein is 5-methylthioadenosine/S-adenosylhomocysteine deaminase.